The chain runs to 109 residues: Movement protein (109 aa).

The tract at residues 1–28 (MDSFGRAPPLWPQSALPRVPGAAPSSSG) is disordered. A helical membrane pass occupies residues 34-54 (VGEIAIFTFVAVLALYLLWSW).

Belongs to the mastrevirus movement protein family. In terms of assembly, interacts with the capsid protein (CP). Part of a MP-CP-viral DNA complex.

It localises to the host membrane. Functionally, involved in the viral transport within, and between cells. This is Movement protein from Sugarcane streak virus (isolate South Africa) (SSV).